The following is a 366-amino-acid chain: Glutamate 5-kinase (366 aa).

Position 17 (Lys17) interacts with ATP. Ser57, Asp144, and Asn156 together coordinate substrate. Residues 176-177 and 216-222 contribute to the ATP site; these read SD and TGGMVSK. Residues 278–356 enclose the PUA domain; the sequence is SGALTLDDGA…SDLPAEMRRP (79 aa).

The protein belongs to the glutamate 5-kinase family.

The protein localises to the cytoplasm. It carries out the reaction L-glutamate + ATP = L-glutamyl 5-phosphate + ADP. It participates in amino-acid biosynthesis; L-proline biosynthesis; L-glutamate 5-semialdehyde from L-glutamate: step 1/2. In terms of biological role, catalyzes the transfer of a phosphate group to glutamate to form L-glutamate 5-phosphate. The chain is Glutamate 5-kinase from Mycolicibacterium vanbaalenii (strain DSM 7251 / JCM 13017 / BCRC 16820 / KCTC 9966 / NRRL B-24157 / PYR-1) (Mycobacterium vanbaalenii).